Consider the following 533-residue polypeptide: Zinc finger protein 26 (533 aa).

In terms of domain architecture, KRAB spans L14–P85. C2H2-type zinc fingers lie at residues C174–H196, Y202–H224, Y230–H252, Y258–H280, Y286–H308, H314–H336, Y342–H364, Y370–H392, Y398–H420, Y426–H448, Y454–H476, F482–H504, and W510–H532.

The protein belongs to the krueppel C2H2-type zinc-finger protein family.

It localises to the nucleus. May be involved in transcriptional regulation. The sequence is that of Zinc finger protein 26 (ZNF26) from Homo sapiens (Human).